The following is a 529-amino-acid chain: [Pyruvate dehydrogenase [acetyl-transferring]]-phosphatase 2, mitochondrial (529 aa).

The transit peptide at 1 to 66 (MSSTVSYWIL…FTLCKAYRHT (66 aa)) directs the protein to the mitochondrion. Residues 106–517 (VLRFESNQLA…DDITVTVVYF (412 aa)) enclose the PPM-type phosphatase domain. Asp141, Gly142, Asp412, and Asp508 together coordinate Mn(2+).

Belongs to the PP2C family. Mg(2+) is required as a cofactor.

It localises to the mitochondrion. The enzyme catalyses O-phospho-L-seryl-[pyruvate dehydrogenase E1 alpha subunit] + H2O = L-seryl-[pyruvate dehydrogenase E1 alpha subunit] + phosphate. Functionally, mitochondrial enzyme that catalyzes the dephosphorylation and concomitant reactivation of the alpha subunit of the E1 component of the pyruvate dehydrogenase complex (PDC), thereby stimulating the conversion of pyruvate into acetyl-CoA. Acts as a crucial regulator of T cell metabolism and function, with a particular focus on T-helper Th17. This Homo sapiens (Human) protein is [Pyruvate dehydrogenase [acetyl-transferring]]-phosphatase 2, mitochondrial.